A 310-amino-acid chain; its full sequence is ER-derived vesicles protein ERV29 (310 aa).

Residues 1-108 (MSYRGPIGNF…YLNKWKHYPY (108 aa)) are Cytoplasmic-facing. The tract at residues 11-31 (GGMPMSSSQGPYSGGAQFRSN) is disordered. The chain crosses the membrane as a helical span at residues 109–129 (FFVVVFLVVVTVSMLIGASLL). Topologically, residues 130 to 137 (VLRKQTNY) are lumenal. A helical membrane pass occupies residues 138 to 158 (ATGVLCACVISQALVYGLFTG). The Cytoplasmic segment spans residues 159–209 (SSFVLRNFSVIGGLLIAFSDSIVQNKTTFGMLPELNSKNDKAKGYLLFAGR). A helical transmembrane segment spans residues 210 to 230 (ILIVLMFIAFTFSKSWFTVVL). The Lumenal segment spans residues 231-245 (TIIGTICFAIGYKTK). A helical membrane pass occupies residues 246-266 (FASIMLGLILTFYNITLNNYW). Over 267–310 (FYNNTKRDFLKYEFYQNLSIIGGLLLVTNTGAGELSVDEKKKIY) the chain is Cytoplasmic. Residues 307 to 310 (KKIY) carry the Di-lysine motif motif.

The protein belongs to the SURF4 family.

The protein resides in the endoplasmic reticulum membrane. In terms of biological role, constituent of COPII-coated endoplasmic reticulum-derived transport vesicles. Required for efficient transport of a subset of secretory proteins to the Golgi. The C-terminal di-lysine motif is required for exit from the endoplasmic reticulum. Required directly for packaging glycosylated pro-alpha-factor into COPII vesicles. Facilitates retrograde transport from the Golgi to the endoplasmic reticulum. The polypeptide is ER-derived vesicles protein ERV29 (ERV29) (Saccharomyces cerevisiae (strain ATCC 204508 / S288c) (Baker's yeast)).